The primary structure comprises 282 residues: Glutamyl endopeptidase (282 aa).

A signal peptide spans 1 to 27 (MKKRFLSICTMTIAALATTTMVNTSYA). The propeptide occupies 28–66 (KTDTESHNHSSLGTENKNVLDINSSSHNIKPSQNKSYPS). Residues His117, Asp159, and Ser235 each act as charge relay system in the active site.

Belongs to the peptidase S1B family. Monomer.

Its subcellular location is the secreted. It catalyses the reaction Preferential cleavage: Glu-|-Xaa, Asp-|-Xaa.. Inhibited by diisopropyl fluorophosphate. Exhibits a significant hydrolytic activity for the carbonyl side of glutamic acid. Shows activity toward human fibronectin and type 1 collagen. The chain is Glutamyl endopeptidase (gseA) from Staphylococcus epidermidis.